A 546-amino-acid chain; its full sequence is Glutathione reductase (546 aa).

An apicoplast-targeting transit peptide spans 2 to 46 (YKHRYFHFFFFFFFFLVSTKIIRSFTFLNNNTNLSNPVYFKKKAN). FAD contacts are provided by S58 and G59. Residue S58 coordinates glutathione. R65 contributes to the glutathione binding site. Positions 78, 85, 86, and 94 each coordinate FAD. C86 and C91 are oxidised to a cystine. Y141 provides a ligand contact to glutathione. A157 is a binding site for FAD. NADP(+)-binding residues include I233, E236, R253, R259, and G318. Residues D358 and T400 each coordinate FAD. R408 is a glutathione binding site. Position 430 (V430) interacts with NADP(+). An FAD-binding site is contributed by H531. H531 acts as the Proton acceptor in catalysis.

It belongs to the class-I pyridine nucleotide-disulfide oxidoreductase family. As to quaternary structure, homodimer. FAD serves as cofactor.

The protein localises to the cytoplasm. It is found in the plastid. The protein resides in the apicoplast. The catalysed reaction is 2 glutathione + NADP(+) = glutathione disulfide + NADPH + H(+). Functionally, catalyzes the reduction of glutathione disulfide (GSSG) to reduced glutathione (GSH). Constitutes the major mechanism to maintain a high GSH:GSSG ratio in the cytosol. This chain is Glutathione reductase, found in Plasmodium falciparum (isolate 3D7).